Reading from the N-terminus, the 223-residue chain is Transmembrane protein 235 (223 aa).

A signal peptide spans 1–28; that stretch reads MARLGALLLAAALGALLSFALLAAAVAS. A glycan (N-linked (GlcNAc...) asparagine) is linked at asparagine 41. A run of 3 helical transmembrane segments spans residues 96–116, 126–146, and 176–196; these read VIVVLPLSLVLLVCGWICGLL, LLFTGCYFLLGSVLTLAGVSI, and WSMALAWGSCALEAFSGTLLL.

It belongs to the PMP-22/EMP/MP20 family. N-glycosylated.

It localises to the membrane. The protein resides in the endoplasmic reticulum. The polypeptide is Transmembrane protein 235 (TMEM235) (Homo sapiens (Human)).